The following is a 346-amino-acid chain: Dehydrogenase orf1 (346 aa).

43 to 48 (VDYATQ) is a binding site for NADP(+). 133–140 (LAFSTAIV) contacts substrate. Residues 170 to 173 (ATSV), 193 to 196 (SPHN), tyrosine 211, and 251 to 252 (LN) each bind NADP(+). 269–273 (APPNV) lines the substrate pocket. 336–337 (VS) contributes to the NADP(+) binding site.

It belongs to the zinc-containing alcohol dehydrogenase family.

It participates in secondary metabolite biosynthesis. In terms of biological role, dehydrogenase; part of the gene cluster that mediates the biosynthesis of nigerpyrone and its derivatives carbonarone A and pestalamide A. The biosynthesis pathway begins with the polyketide assembly by epaA to form phenylacetyl triketide precursor from successive condensation of two malonyl-CoA, presumably with one phenylacetyl-CoA starter unit produced by the phenylacetyl-CoA ligase epaB. For the nigerpyrone biosynthesis, the reactive polyketide chain is released as an aldehyde through the R-domain. A nonenzymatic cyclization and dehydration may create nigerpyrone. For the biosynthesis of carbonarone A and pestalamide A, an extra methyl group is added through the C-methyltransferase domain. Several further steps involving the dehydrogenase orf1, the cytochrome P450 monooxygenase orf2 and the FAD-dependent monooxygenase orf3 are required to form a carbonarone A precursor which is converted to carbonarone A via cyclization. The O-acetyltransferase epaC could catalyze the transfer of 2-methylsuccinyl-CoA, a common intermediate in the ethylmalonyl-CoA pathway, to generate the final product pestalamide A. The protein is Dehydrogenase orf1 of Aspergillus niger (strain ATCC MYA-4892 / CBS 513.88 / FGSC A1513).